The primary structure comprises 72 residues: UPF0352 protein HI_0840 (72 aa).

This sequence belongs to the UPF0352 family.

This Haemophilus influenzae (strain ATCC 51907 / DSM 11121 / KW20 / Rd) protein is UPF0352 protein HI_0840.